Reading from the N-terminus, the 332-residue chain is Ribosomal RNA small subunit methyltransferase C (332 aa).

The protein belongs to the methyltransferase superfamily. RsmC family. Monomer.

It is found in the cytoplasm. The enzyme catalyses guanosine(1207) in 16S rRNA + S-adenosyl-L-methionine = N(2)-methylguanosine(1207) in 16S rRNA + S-adenosyl-L-homocysteine + H(+). Its function is as follows. Specifically methylates the guanine in position 1207 of 16S rRNA in the 30S particle. The protein is Ribosomal RNA small subunit methyltransferase C of Pseudomonas paraeruginosa (strain DSM 24068 / PA7) (Pseudomonas aeruginosa (strain PA7)).